A 271-amino-acid polypeptide reads, in one-letter code: MNMLSEAAVEKALDKKMNEVSYKMIGKDVSVYYGEKRALYDVNLNVRENTVTALIGPSGCGKSTFLRTLNRMNDTIDGCRVTGKITLDTDDIYDQQIDVVELRARVGMVFQKPNPFPKTIYENIAYGPRIHGLARNKADMDQIVEHSLQKAGLWNEVKDRLLESGTGLSGGQQQRLCIARAVAVSPEVILMDEPCSALDPIATAKVEELIHELRTNYTIVIVTHSMQQAARVSQRTAMFHLGHLVEENETDKMFTNPDDQRTQDYIMGRFG.

Residues 24–266 (MIGKDVSVYY…PDDQRTQDYI (243 aa)) enclose the ABC transporter domain. 56–63 (GPSGCGKS) contacts ATP.

Belongs to the ABC transporter superfamily. Phosphate importer (TC 3.A.1.7) family. As to quaternary structure, the complex is composed of two ATP-binding proteins (PstB), two transmembrane proteins (PstC and PstA) and a solute-binding protein (PstS).

The protein resides in the cell inner membrane. It catalyses the reaction phosphate(out) + ATP + H2O = ADP + 2 phosphate(in) + H(+). Functionally, part of the ABC transporter complex PstSACB involved in phosphate import. Responsible for energy coupling to the transport system. In Agrobacterium fabrum (strain C58 / ATCC 33970) (Agrobacterium tumefaciens (strain C58)), this protein is Phosphate import ATP-binding protein PstB.